Reading from the N-terminus, the 511-residue chain is MIHDMIKTIEHFAETQADFPVYDILGEVHTYGQLKVDSDSLAAHIDSLGLVEKSPVLVFGGQEYEMLATFVALTKSGHAYIPVDQHSALDRIQAIMTVAQPSLIISIGEFPLEVDNVPILDVSQVSAIFEEKTPYEVTHSVKGDDNYYIIFTSGTTGLPKGVQISHDNLLSFTNWMISDDEFSVPERPQMLAQPPYSFDLSVMYWAPTLAMGGTLFALPKTVVNDFKKLFATINELPIQVWTSTPSFADMALLSNDFNSETLPQLTHFYFDGEELTVKTAQKLRQRFPKARIVNAYGPTEATVALSAVAITDEMLETCKRLPIGYTKDDSPTYVIDEEGHKLPNGEQGEIIIAGPAVSKGYLNNPEKTAEAFFQFEGLPAYHTGDLGSMTDEGLLLYGGRMDFQIKFNGYRIELEDVSQNLNKSQYVKSAVAVPRYNKDHKVQNLLAYIVLKEGVRDDFERDLDLTKAIKEDLKDIMMDYMMPSKFIYREDLPLTPNGKIDIKGLMSEVNK.

152–153 (TS) lines the ATP pocket. Aspartate 199 is a binding site for D-alanine. 294-299 (NAYGPT) contacts ATP. Valine 303 contacts D-alanine. Residues aspartate 385, 397-400 (YGGR), and lysine 499 contribute to the ATP site. Lysine 499 lines the D-alanine pocket.

It belongs to the ATP-dependent AMP-binding enzyme family. DltA subfamily.

It localises to the cytoplasm. The catalysed reaction is holo-[D-alanyl-carrier protein] + D-alanine + ATP = D-alanyl-[D-alanyl-carrier protein] + AMP + diphosphate. Its pathway is cell wall biogenesis; lipoteichoic acid biosynthesis. Its function is as follows. Catalyzes the first step in the D-alanylation of lipoteichoic acid (LTA), the activation of D-alanine and its transfer onto the D-alanyl carrier protein (Dcp) DltC. In an ATP-dependent two-step reaction, forms a high energy D-alanyl-AMP intermediate, followed by transfer of the D-alanyl residue as a thiol ester to the phosphopantheinyl prosthetic group of the Dcp. D-alanylation of LTA plays an important role in modulating the properties of the cell wall in Gram-positive bacteria, influencing the net charge of the cell wall. This chain is D-alanine--D-alanyl carrier protein ligase, found in Streptococcus agalactiae serotype V (strain ATCC BAA-611 / 2603 V/R).